The following is a 210-amino-acid chain: uncharacterized protein (210 aa).

This is an uncharacterized protein from Fowl adenovirus A serotype 1 (strain CELO / Phelps) (FAdV-1).